Reading from the N-terminus, the 214-residue chain is Probable nicotinate-nucleotide adenylyltransferase (214 aa).

This sequence belongs to the NadD family.

It catalyses the reaction nicotinate beta-D-ribonucleotide + ATP + H(+) = deamido-NAD(+) + diphosphate. It functions in the pathway cofactor biosynthesis; NAD(+) biosynthesis; deamido-NAD(+) from nicotinate D-ribonucleotide: step 1/1. Catalyzes the reversible adenylation of nicotinate mononucleotide (NaMN) to nicotinic acid adenine dinucleotide (NaAD). The sequence is that of Probable nicotinate-nucleotide adenylyltransferase from Aeromonas hydrophila subsp. hydrophila (strain ATCC 7966 / DSM 30187 / BCRC 13018 / CCUG 14551 / JCM 1027 / KCTC 2358 / NCIMB 9240 / NCTC 8049).